The following is a 266-amino-acid chain: Hydroxypyruvate/pyruvate aldolase (266 aa).

Histidine 48 serves as the catalytic Proton acceptor. Residues glutamate 152 and aspartate 178 each contribute to the a divalent metal cation site.

Belongs to the HpcH/HpaI aldolase family. Requires a divalent metal cation as cofactor.

The enzyme catalyses D-glyceraldehyde + pyruvate = 2-dehydro-3-deoxy-L-galactonate. It catalyses the reaction 2-dehydro-3-deoxy-D-gluconate = D-glyceraldehyde + pyruvate. Its function is as follows. Aldolase which can catalyze in vitro the aldolisation reaction between hydroxypyruvate (HPA) or pyruvate (PA) and D-glyceraldehyde (D-GA). The condensation of pyruvate and D-glyceraldehyde produces 2-dehydro-3-deoxy-L-galactonate as the major product and 2-dehydro-3-deoxy-D-gluconate. Has weak activity with hydroxypyruvate and D-glyceraldehyde. The polypeptide is Hydroxypyruvate/pyruvate aldolase (Agrobacterium fabrum (strain C58 / ATCC 33970) (Agrobacterium tumefaciens (strain C58))).